The sequence spans 228 residues: Prolactin (228 aa).

An N-terminal signal peptide occupies residues 1 to 29 (MGTKRSSLKGSLLLLLLMSSLFLFKSVES). Cysteine 33 and cysteine 40 are joined by a disulfide. A phosphoserine mark is found at serine 55, serine 63, and serine 119. 2 disulfides stabilise this stretch: cysteine 87–cysteine 203 and cysteine 220–cysteine 228.

It belongs to the somatotropin/prolactin family. As to quaternary structure, interacts with PRLR.

It localises to the secreted. Its function is as follows. Prolactin acts primarily on the mammary gland by promoting lactation, mammogenesis, mitogenesis and osmoregulation. This chain is Prolactin (PRL), found in Trichosurus vulpecula (Brush-tailed possum).